Consider the following 151-residue polypeptide: NPC intracellular cholesterol transporter 2 (151 aa).

The signal sequence occupies residues 1–19 (MRFLAATFLLLALSTAAQA). 3 cysteine pairs are disulfide-bonded: C27–C140, C42–C47, and C93–C99. A glycan (N-linked (GlcNAc...) asparagine) is linked at N58. Residue K116 is modified to N6-acetyllysine. N135 carries an N-linked (GlcNAc...) asparagine glycan.

It belongs to the NPC2 family. In terms of assembly, interacts with NPC1 (via the second lumenal domain) in a cholestrol-dependent manner. Interacts with NUS1/NgBR, the interaction stabilizes NCP2 and regulates cholesterol trafficking. Interacts with DHDDS. Interacts with NEDD4L (via C2 domain). Interacts with NPC1L1. Detected in gallbladder bile. Detected in fibroblasts, kidney, liver, spleen, small intestine, placenta and testis (at protein level). Epididymis.

It is found in the secreted. The protein localises to the endoplasmic reticulum. It localises to the lysosome. The enzyme catalyses cholesterol(in) = cholesterol(out). In terms of biological role, intracellular cholesterol transporter which acts in concert with NPC1 and plays an important role in the egress of cholesterol from the lysosomal compartment. Unesterified cholesterol that has been released from LDLs in the lumen of the late endosomes/lysosomes is transferred by NPC2 to the cholesterol-binding pocket in the N-terminal domain of NPC1. May bind and mobilize cholesterol that is associated with membranes. NPC2 binds cholesterol with a 1:1 stoichiometry. Can bind a variety of sterols, including lathosterol, desmosterol and the plant sterols stigmasterol and beta-sitosterol. The secreted form of NCP2 regulates biliary cholesterol secretion via stimulation of ABCG5/ABCG8-mediated cholesterol transport. The protein is NPC intracellular cholesterol transporter 2 of Homo sapiens (Human).